Consider the following 1103-residue polypeptide: MAAGCLLALTLTLFQSLLIGPSSEEPFPSAVTIKSWVDKMQEDLVTLAKTASGVNQLVDIYEKYQDLYTVEPNNARQLVEIAARDIEKLLSNRSKALVRLALEAEKVQAAHQWREDFASNEVVYYNAKDDLDPEKNDSEPGSQRIKPVFIEDANFGRQISYQHAAVHIPTDIYEGSTIVLNELNWTSALDEVFKKNREEDPSLLWQVFGSATGLARYYPASPWVDNSRTPNKIDLYDVRRRPWYIQGAASPKDMLILVDVSGSVSGLTLKLIRTSVSEMLETLSDDDFVNVASFNSNAQDVSCFQHLVQANVRNKKVLKDAVNNITAKGITDYKKGFSFAFEQLLNYNVSRANCNKIIMLFTDGGEERAQEIFNKYNKDKKVRVFTFSVGQHNYDRGPIQWMACENKGYYYEIPSIGAIRINTQEYLDVLGRPMVLAGDKAKQVQWTNVYLDALELGLVITGTLPVFNITGQFENKTNLKNQLILGVMGVDVSLEDIKRLTPRFTLCPNGYYFAIDPNGYVLLHPNLQPKPIGVGIPTINLRKRRPNIQNPKSQEPVTLDFLDAELENDIKVEIRNKMIDGESGEKTFRTLVKSQDERYIDKGNRTYTWTPVNGTDYSLALVLPTYSFYYIKAKLEETITQARYSETLKPDNFEESGYTFIAPRDYCNDLKISDNNTEFLLNFNEFIDRKTPNNPSCNADLINRVLLDAGFTNELVQNYWSKQKNIKGVKARFVVTDGGITRVYPKEAGENWQENPETYEDSFYKRSLDNDNYVFTAPYFNKSGPGAYESGIMVSKAVEIYIQGKLLKPAVVGIKIDVNSWIENFTKTSIRDPCAGPVCDCKRNSDVMDCVILDDGGFLLMANHDDYTNQIGRFFGEIDPSLMRHLVNISVYAFNKSYDYQSVCEPGAAPKQGAGHRSAYVPSVADILQIGWWATAAAWSILQQFLLSLTFPRLLEAVEMEDDDFTASLSKQSCITEQTQYFFDNDSKSFSGVLDCGNCSRIFHGEKLMNTNLIFIMVESKGTCPCDTRLLIQAEQTSDGPNPCDMVKQPRYRKGPDVCFDNNVLEDYTDCGGVSGLNPSLWYIIGIQFLLLWLVSGSTHRLL.

The N-terminal stretch at 1 to 24 is a signal peptide; that stretch reads MAAGCLLALTLTLFQSLLIGPSSE. The Extracellular portion of the chain corresponds to 25 to 1073; the sequence is EPFPSAVTIK…VLEDYTDCGG (1049 aa). Asparagine 92 carries an N-linked (GlcNAc...) asparagine glycan. Serine 119 bears the Phosphoserine mark. N-linked (GlcNAc...) asparagine glycans are attached at residues asparagine 136 and asparagine 184. The VWFA domain occupies 253–430; sequence DMLILVDVSG…INTQEYLDVL (178 aa). Residues aspartate 259, serine 261, and serine 263 each contribute to the a divalent metal cation site. The MIDAS-like motif signature appears at 259-263; the sequence is DVSGS. Asparagine 324, asparagine 348, asparagine 468, asparagine 475, asparagine 604, asparagine 613, asparagine 675, asparagine 781, asparagine 824, asparagine 888, asparagine 895, asparagine 985, and asparagine 998 each carry an N-linked (GlcNAc...) asparagine glycan. Cysteines 404 and 1059 form a disulfide. The 111-residue stretch at 446–556 folds into the Cache domain; the sequence is WTNVYLDALE…NIQNPKSQEP (111 aa). Residues 1074-1094 traverse the membrane as a helical segment; that stretch reads VSGLNPSLWYIIGIQFLLLWL. Residues 1095–1103 lie on the Cytoplasmic side of the membrane; it reads VSGSTHRLL.

Belongs to the calcium channel subunit alpha-2/delta family. As to quaternary structure, dimer formed of alpha-2-1 and delta-1 chains; disulfide-linked. Voltage-dependent calcium channels are multisubunit complexes, consisting of alpha-1 (CACNA1), alpha-2 (CACNA2D), beta (CACNB) and delta (CACNA2D) subunits in a 1:1:1:1 ratio. Post-translationally, proteolytically processed into subunits alpha-2-1 and delta-1 that are disulfide-linked. In terms of tissue distribution, isoform 1 is expressed in skeletal muscle. Isoform 2 is expressed in the central nervous system. Isoform 2, isoform 4 and isoform 5 are expressed in neuroblastoma cells. Isoform 3, isoform 4 and isoform 5 are expressed in the aorta.

It localises to the membrane. It is found in the cell membrane. The alpha-2/delta subunit of voltage-dependent calcium channels regulates calcium current density and activation/inactivation kinetics of the calcium channel. Plays an important role in excitation-contraction coupling. The polypeptide is Voltage-dependent calcium channel subunit alpha-2/delta-1 (CACNA2D1) (Homo sapiens (Human)).